Consider the following 346-residue polypeptide: Phenylalanine--tRNA ligase alpha subunit (346 aa).

E258 is a Mg(2+) binding site.

This sequence belongs to the class-II aminoacyl-tRNA synthetase family. Phe-tRNA synthetase alpha subunit type 1 subfamily. As to quaternary structure, tetramer of two alpha and two beta subunits. Mg(2+) serves as cofactor.

The protein resides in the cytoplasm. The enzyme catalyses tRNA(Phe) + L-phenylalanine + ATP = L-phenylalanyl-tRNA(Phe) + AMP + diphosphate + H(+). The sequence is that of Phenylalanine--tRNA ligase alpha subunit from Protochlamydia amoebophila (strain UWE25).